Consider the following 93-residue polypeptide: Consomatin G1 (93 aa).

The first 22 residues, 1 to 22 (MQTAYWVMLMMMVCITAPLPEG), serve as a signal peptide directing secretion. Residues 23–69 (GKPNSGIRGLVPNDLTPQHTLRSLISRRQTDVLLDATLLTTPAPEQR) constitute a propeptide that is removed on maturation. Residues Cys-72 and Cys-77 are joined by a disulfide bond. The residue at position 74 (Trp-74) is a D-tryptophan. The propeptide occupies 79–93 (PRPYPWRRRDLNGKR).

It belongs to the conotoxin C superfamily. Consomatin family. Expressed by the venom duct.

The protein resides in the secreted. Its function is as follows. Potently activates human somatostatin receptors (SSTR) with a specific activation of SSTR2 (EC(50)=2.6 nM). This is Consomatin G1 from Conus geographus (Geography cone).